We begin with the raw amino-acid sequence, 380 residues long: Dual-specificity RNA methyltransferase RlmN (380 aa).

The active-site Proton acceptor is Glu94. The Radical SAM core domain maps to 100 to 339 (DGDRATLCVS…VTVRKTRGDD (240 aa)). Cysteines 107 and 344 form a disulfide. [4Fe-4S] cluster contacts are provided by Cys114, Cys118, and Cys121. S-adenosyl-L-methionine is bound by residues 168 to 169 (GE), Ser200, 222 to 224 (SLH), and Asn301. The active-site S-methylcysteine intermediate is Cys344.

It belongs to the radical SAM superfamily. RlmN family. [4Fe-4S] cluster serves as cofactor.

The protein localises to the cytoplasm. The enzyme catalyses adenosine(2503) in 23S rRNA + 2 reduced [2Fe-2S]-[ferredoxin] + 2 S-adenosyl-L-methionine = 2-methyladenosine(2503) in 23S rRNA + 5'-deoxyadenosine + L-methionine + 2 oxidized [2Fe-2S]-[ferredoxin] + S-adenosyl-L-homocysteine. It carries out the reaction adenosine(37) in tRNA + 2 reduced [2Fe-2S]-[ferredoxin] + 2 S-adenosyl-L-methionine = 2-methyladenosine(37) in tRNA + 5'-deoxyadenosine + L-methionine + 2 oxidized [2Fe-2S]-[ferredoxin] + S-adenosyl-L-homocysteine. In terms of biological role, specifically methylates position 2 of adenine 2503 in 23S rRNA and position 2 of adenine 37 in tRNAs. m2A2503 modification seems to play a crucial role in the proofreading step occurring at the peptidyl transferase center and thus would serve to optimize ribosomal fidelity. The sequence is that of Dual-specificity RNA methyltransferase RlmN from Vibrio atlanticus (strain LGP32) (Vibrio splendidus (strain Mel32)).